Here is a 589-residue protein sequence, read N- to C-terminus: Arginine--tRNA ligase (589 aa).

Positions 132 to 142 match the 'HIGH' region motif; sequence PNTNKPLHVGH.

The protein belongs to the class-I aminoacyl-tRNA synthetase family. As to quaternary structure, monomer.

It localises to the cytoplasm. The catalysed reaction is tRNA(Arg) + L-arginine + ATP = L-arginyl-tRNA(Arg) + AMP + diphosphate. This is Arginine--tRNA ligase from Treponema pallidum subsp. pallidum (strain SS14).